The chain runs to 397 residues: Nuclear RNA export factor 5 (397 aa).

The region spanning 13 to 92 (WFKVTIPYGI…IFVSHFTAPY (80 aa)) is the RRM domain. LRR repeat units follow at residues 160 to 185 (ELLS…EKAP), 186 to 209 (KVKT…VKGL), 210 to 237 (KLEE…AIRD), and 238 to 265 (CFPK…ETMK). One can recognise an NTF2; truncated domain in the interval 280 to 367 (LVLQFLQQSN…ESQRWWCLLS (88 aa)).

It belongs to the NXF family. In terms of assembly, interacts with NXT1 and NXT2.

It localises to the cytoplasm. Its subcellular location is the nucleus. Could be involved in the export of mRNA from the nucleus to the cytoplasm. Could also have a role in polarized cytoplasmic transport and localization of mRNA in neurons. The protein is Nuclear RNA export factor 5 (NXF5) of Homo sapiens (Human).